A 229-amino-acid chain; its full sequence is Putative N-acetylmannosamine-6-phosphate 2-epimerase (229 aa).

This sequence belongs to the NanE family.

The catalysed reaction is an N-acyl-D-glucosamine 6-phosphate = an N-acyl-D-mannosamine 6-phosphate. It functions in the pathway amino-sugar metabolism; N-acetylneuraminate degradation; D-fructose 6-phosphate from N-acetylneuraminate: step 3/5. Functionally, converts N-acetylmannosamine-6-phosphate (ManNAc-6-P) to N-acetylglucosamine-6-phosphate (GlcNAc-6-P). The sequence is that of Putative N-acetylmannosamine-6-phosphate 2-epimerase from Shigella dysenteriae serotype 1 (strain Sd197).